The chain runs to 375 residues: Tryptophan--tRNA ligase (375 aa).

The short motif at 81–89 is the 'HIGH' region element; that stretch reads PSGPVHIGH. A 'KMSKS' region motif is present at residues 258–262; sequence KMSAS.

This sequence belongs to the class-I aminoacyl-tRNA synthetase family.

It localises to the cytoplasm. It catalyses the reaction tRNA(Trp) + L-tryptophan + ATP = L-tryptophyl-tRNA(Trp) + AMP + diphosphate + H(+). This Pyrobaculum aerophilum (strain ATCC 51768 / DSM 7523 / JCM 9630 / CIP 104966 / NBRC 100827 / IM2) protein is Tryptophan--tRNA ligase.